Consider the following 292-residue polypeptide: MQIVLISGLSGSGKSIALHVLEDAGYYVVDNLPSALLLQLVLHLRGAGYQRVAVAVDMRSGSSIAALPEQVESLRGMVDDLRFIFLEARDDTLIARFSETRRRHPLADENVSLDEAIQRERDALASVAELGHRMDTSDIHANTLRAWIKDFIGAAASEGLTLMFQSFGFKYGIPLDADLVFDVRCLPNPYYDPLLRPLTGRDQGVIDYLEKVPEVGRMAEDIRRFVADWLPAYMRDNRSYLTVAIGCTGGQHRSVYMAEWLARRFADRVRVIVRHRSAARRVQDAPPAVSGK.

Residue 8-15 coordinates ATP; sequence GLSGSGKS. A GTP-binding site is contributed by 57–60; the sequence is DMRS.

The protein belongs to the RapZ-like family.

In terms of biological role, displays ATPase and GTPase activities. This chain is Nucleotide-binding protein azo0399, found in Azoarcus sp. (strain BH72).